Consider the following 141-residue polypeptide: Large ribosomal subunit protein uL11 (141 aa).

Belongs to the universal ribosomal protein uL11 family. Part of the ribosomal stalk of the 50S ribosomal subunit. Interacts with L10 and the large rRNA to form the base of the stalk. L10 forms an elongated spine to which L12 dimers bind in a sequential fashion forming a multimeric L10(L12)X complex. Post-translationally, one or more lysine residues are methylated.

Forms part of the ribosomal stalk which helps the ribosome interact with GTP-bound translation factors. The polypeptide is Large ribosomal subunit protein uL11 (Clostridium tetani (strain Massachusetts / E88)).